The sequence spans 72 residues: Translation initiation factor IF-1 (72 aa).

An S1-like domain is found at 1–72 (MTKEENIEMQ…SKGRIIFRSR (72 aa)).

The protein belongs to the IF-1 family. As to quaternary structure, component of the 30S ribosomal translation pre-initiation complex which assembles on the 30S ribosome in the order IF-2 and IF-3, IF-1 and N-formylmethionyl-tRNA(fMet); mRNA recruitment can occur at any time during PIC assembly.

The protein localises to the cytoplasm. Its function is as follows. One of the essential components for the initiation of protein synthesis. Stabilizes the binding of IF-2 and IF-3 on the 30S subunit to which N-formylmethionyl-tRNA(fMet) subsequently binds. Helps modulate mRNA selection, yielding the 30S pre-initiation complex (PIC). Upon addition of the 50S ribosomal subunit IF-1, IF-2 and IF-3 are released leaving the mature 70S translation initiation complex. The polypeptide is Translation initiation factor IF-1 (Wigglesworthia glossinidia brevipalpis).